The chain runs to 171 residues: Adenine phosphoribosyltransferase (171 aa).

Belongs to the purine/pyrimidine phosphoribosyltransferase family. Homodimer.

The protein localises to the cytoplasm. The catalysed reaction is AMP + diphosphate = 5-phospho-alpha-D-ribose 1-diphosphate + adenine. The protein operates within purine metabolism; AMP biosynthesis via salvage pathway; AMP from adenine: step 1/1. Its function is as follows. Catalyzes a salvage reaction resulting in the formation of AMP, that is energically less costly than de novo synthesis. The sequence is that of Adenine phosphoribosyltransferase from Methylococcus capsulatus (strain ATCC 33009 / NCIMB 11132 / Bath).